The primary structure comprises 707 residues: Polyribonucleotide nucleotidyltransferase (707 aa).

Residues aspartate 485 and aspartate 491 each contribute to the Mg(2+) site. The KH domain occupies 552-611 (PRIHTMKINSDKIKDVIGKGGAVIRALTEETGTTIEIEDDGTIKIAATEGAAAKEAIRRI). Positions 621–689 (GRIYTGKVMR…RQGRIRLSMK (69 aa)) constitute an S1 motif domain.

It belongs to the polyribonucleotide nucleotidyltransferase family. In terms of assembly, component of the RNA degradosome, which is a multiprotein complex involved in RNA processing and mRNA degradation. It depends on Mg(2+) as a cofactor.

It is found in the cytoplasm. It carries out the reaction RNA(n+1) + phosphate = RNA(n) + a ribonucleoside 5'-diphosphate. Involved in mRNA degradation. Catalyzes the phosphorolysis of single-stranded polyribonucleotides processively in the 3'- to 5'-direction. This chain is Polyribonucleotide nucleotidyltransferase, found in Photobacterium profundum (strain SS9).